Here is a 166-residue protein sequence, read N- to C-terminus: Small ribosomal subunit protein uS5 (166 aa).

Residues 11–74 (LQEKLVQVNR…EAARKNMVDV (64 aa)) form the S5 DRBM domain.

It belongs to the universal ribosomal protein uS5 family. In terms of assembly, part of the 30S ribosomal subunit. Contacts proteins S4 and S8.

Functionally, with S4 and S12 plays an important role in translational accuracy. Located at the back of the 30S subunit body where it stabilizes the conformation of the head with respect to the body. This Marinobacter nauticus (strain ATCC 700491 / DSM 11845 / VT8) (Marinobacter aquaeolei) protein is Small ribosomal subunit protein uS5.